We begin with the raw amino-acid sequence, 246 residues long: uncharacterized protein (246 aa).

Basic residues-rich tracts occupy residues 1-10 (MVWRFQKHIG) and 79-97 (TRRR…KAGR). A disordered region spans residues 1–184 (MVWRFQKHIG…LPPAHVPPTL (184 aa)). The span at 158–180 (PPFPPPPPPGDPTPPSPLPPAHV) shows a compositional bias: pro residues.

This is an uncharacterized protein from Homo sapiens (Human).